The sequence spans 419 residues: N-acylglucosamine 2-epimerase (419 aa).

A leucine-zipper region spans residues Leu185 to Leu206. Ser418 bears the Phosphoserine mark.

Belongs to the N-acylglucosamine 2-epimerase family. Homodimer. Forms a heterodimer with renin and inhibits its activity.

It carries out the reaction an N-acyl-D-glucosamine = an N-acyl-D-mannosamine. It functions in the pathway amino-sugar metabolism; N-acetylneuraminate degradation. Functionally, catalyzes the interconversion of N-acetylglucosamine to N-acetylmannosamine. Involved in the N-glycolylneuraminic acid (Neu5Gc) degradation pathway. The polypeptide is N-acylglucosamine 2-epimerase (Renbp) (Mus musculus (Mouse)).